The chain runs to 61 residues: Ferredoxin-3 (61 aa).

4Fe-4S ferredoxin-type domains lie at 2 to 31 (YKITIDTDKCTGDGECVDVCPVEVYELQDG) and 32 to 61 (KAVAVNEDECLGCESCVEVCEQDALTVEEN). [3Fe-4S] cluster contacts are provided by C11 and C17. [4Fe-4S] cluster-binding residues include C21, C41, C44, and C47. A [3Fe-4S] cluster-binding site is contributed by C51.

[3Fe-4S] cluster is required as a cofactor. The cofactor is [4Fe-4S] cluster.

Ferredoxins are iron-sulfur proteins that transfer electrons in a wide variety of metabolic reactions. The polypeptide is Ferredoxin-3 (Desulfocurvibacter africanus (Desulfovibrio africanus)).